A 366-amino-acid chain; its full sequence is Carbamoyl phosphate synthase small chain (366 aa).

The interval 1 to 171 is CPSase; the sequence is MKKRKLILED…KPYVVPGRGL (171 aa). L-glutamine-binding residues include Ser46, Gly220, and Gly222. The region spanning 172 to 359 is the Glutamine amidotransferase type-1 domain; the sequence is RVVMVDFGAK…LNLIKASKVK (188 aa). The active-site Nucleophile is Cys247. The L-glutamine site is built by Leu248, Gln251, Asn289, and Tyr292. Catalysis depends on residues His332 and Glu334.

Belongs to the CarA family. As to quaternary structure, composed of two chains; the small (or glutamine) chain promotes the hydrolysis of glutamine to ammonia, which is used by the large (or ammonia) chain to synthesize carbamoyl phosphate. Tetramer of heterodimers (alpha,beta)4.

It carries out the reaction hydrogencarbonate + L-glutamine + 2 ATP + H2O = carbamoyl phosphate + L-glutamate + 2 ADP + phosphate + 2 H(+). It catalyses the reaction L-glutamine + H2O = L-glutamate + NH4(+). It participates in amino-acid biosynthesis; L-arginine biosynthesis; carbamoyl phosphate from bicarbonate: step 1/1. Its pathway is pyrimidine metabolism; UMP biosynthesis via de novo pathway; (S)-dihydroorotate from bicarbonate: step 1/3. Functionally, small subunit of the glutamine-dependent carbamoyl phosphate synthetase (CPSase). CPSase catalyzes the formation of carbamoyl phosphate from the ammonia moiety of glutamine, carbonate, and phosphate donated by ATP, constituting the first step of 2 biosynthetic pathways, one leading to arginine and/or urea and the other to pyrimidine nucleotides. The small subunit (glutamine amidotransferase) binds and cleaves glutamine to supply the large subunit with the substrate ammonia. The sequence is that of Carbamoyl phosphate synthase small chain from Oceanobacillus iheyensis (strain DSM 14371 / CIP 107618 / JCM 11309 / KCTC 3954 / HTE831).